We begin with the raw amino-acid sequence, 65 residues long: Gallinacin-12 (65 aa).

An N-terminal signal peptide occupies residues 1-19 (MRNLCFVFIFISLLAHGST). 3 disulfides stabilise this stretch: Cys25-Cys54, Cys32-Cys47, and Cys37-Cys55.

The protein belongs to the beta-defensin family. As to expression, expressed in the large intestine, kidney liver, gall bladder, testis, ovary and male and female reproductive tracts. Expressed in the ovarian stroma and the theca and granulosa layers of the ovarian follicle.

The protein localises to the secreted. It is found in the cytoplasmic granule. Functionally, has bactericidal activity. The polypeptide is Gallinacin-12 (GAL12) (Gallus gallus (Chicken)).